The primary structure comprises 778 residues: Protein SPT2 homolog (778 aa).

3 disordered regions span residues 1–21 (MDFH…GIAK), 50–625 (KKDE…AKPK), and 639–685 (VPKS…DDDD). The interval 1-665 (MDFHSVLKMA…PGHRPAMRPP (665 aa)) is important for interaction with DNA. Residues 44 to 83 (VQAFLRKKDEESRRKETVEKRKKEDLLAKRKELKHDRKAR) adopt a coiled-coil conformation. A compositionally biased stretch (basic and acidic residues) spans 50-78 (KKDEESRRKETVEKRKKEDLLAKRKELKH). The span at 114 to 135 (EEDQNDNMAAEGEEYMTEEELY) shows a compositional bias: acidic residues. Residues 153–167 (QKVPKPAPGKKPPTP) show a composition bias toward pro residues. Basic and acidic residues predominate over residues 190-227 (RPVKKEERLRTAEELKELEFLERKAQKADRKDPKRNEQ). Residues 193–221 (KKEERLRTAEELKELEFLERKAQKADRKD) adopt a coiled-coil conformation. Residues 242 to 269 (LKGTHSGNSKSSSTEQNGTIRKSSSDTG) are compositionally biased toward polar residues. Basic and acidic residues predominate over residues 270–286 (SRTEKSGSVFHTKESKK). Residues 312–335 (SSQPSAASNSAFGRPSGSARPSGS) show a composition bias toward low complexity. 2 stretches are compositionally biased toward gly residues: residues 336-357 (SGPG…GGSA) and 365-384 (GGSG…GKPI). Residues 385–394 (GGLHSSHGSG) are compositionally biased toward low complexity. A compositionally biased stretch (gly residues) spans 395–417 (KPTGGTGSGSGKPTGASGSGSGK). 2 stretches are compositionally biased toward low complexity: residues 418–493 (PTGS…SGSA) and 506–559 (GSGS…PSSS). A compositionally biased stretch (polar residues) spans 588-604 (VRPNSTSVPGSARSSLG). The segment covering 662 to 671 (MRPPGPPLPP) has biased composition (pro residues). The tract at residues 666-778 (GPPLPPITSS…QLKAAKKMSR (113 aa)) is important for interaction with histones. Residues 735-778 (REQQKEEARSLRLGIQEDLEELQREEEELKRKAKQLKAAKKMSR) adopt a coiled-coil conformation.

Belongs to the SPT2 family. In terms of assembly, interacts with histones. Interacts with a heterotetrameric complex formed by histone H3 and H4, especially when the histone tetramer is not bound to DNA.

The protein resides in the nucleus. It is found in the nucleolus. Its function is as follows. Histone chaperone that stabilizes pre-existing histone tetramers and regulates replication-independent histone exchange on chromatin. Required for normal chromatin refolding in the coding region of transcribed genes, and for the suppression of spurious transcription. Binds DNA and histones and promotes nucleosome assembly (in vitro). Facilitates formation of tetrameric histone complexes containing histone H3 and H4. Modulates RNA polymerase 1-mediated transcription. Binds DNA, with a preference for branched DNA species, such as Y-form DNA and Holliday junction DNA. This chain is Protein SPT2 homolog (spty2d1), found in Xenopus tropicalis (Western clawed frog).